The following is a 629-amino-acid chain: Citrate (Re)-synthase (629 aa).

Residues 59-329 form the Pyruvate carboxyltransferase domain; the sequence is IFITDTTFRD…TNGIDTTVIT (271 aa). A Cache domain is found at 497–601; it reads VMQRFIEEYP…GVDIRVEDLV (105 aa).

It belongs to the alpha-IPM synthase/homocitrate synthase family. In terms of assembly, homotetramer. It depends on Co(2+) as a cofactor. Requires Mn(2+) as cofactor.

It catalyses the reaction oxaloacetate + acetyl-CoA + H2O = citrate + CoA + H(+). With respect to regulation, inhibited by p-hydroxymercuribenzoate and EDTA. Catalyzes the condensation of the acetyl group of acetyl-CoA with oxaloacetate to form citrate. In Syntrophus aciditrophicus (strain SB), this protein is Citrate (Re)-synthase.